We begin with the raw amino-acid sequence, 647 residues long: MDSAVRPPVDAEEARRRRSTDCIYFLASPLTCKKGSECEYRHSDAARMNPRDCWYWFNGNCANPKCSFRHPPLDGLVGAPTTPRTSQQSAPQVSVPAQAPVPNPASGTAKQGVPCYYFQKGMCVKGDRCAFLHLPQATGSPAPQHTTKVFAPASVPHPQLKNSWTKPNSSAQQNAPPAIFDKPKDSAHNGKTAQKQNLTNRAGHSSGIIHDKKGSYMPSGVTKNYRPPPSTGDDLAENGVEMGEFVREPSPGSDVLTGGADDNTEQSLREDRGAYRRTNGEQHIGMLRQTHDSYGFERSHRGSAEKLLSESRFSQREPMPLTADSSDLRQRLLKQRRLNNPRSGQVSDRHNVYPEDERHDRHRQRGEEQASNDGVSSSRLRGRIRLPAETTFDRLGLQPEKERDRGPRARLSPPSQTDLRGKLHDRLKAKPNEDVSGNVQSSLSKANEDAESLNFAGPKSLAELKAKKVAGSLMKSSRSLTGPVRMTSEIVTIKDSSDPVLFDGPKPLNAILKRKREADSGNATDFGSKREEHSGGDEEGSQNDFRNIEDDIVGMNTEGNGEEAFQPEDDVVYGDSLSPADDIAAEAADDASRELEEQQDVETAEEYDYEMDDVNAAEENDYQEYEDEDDDLEDDDDFARKVGVMIT.

2 consecutive C3H1-type zinc fingers follow at residues 16 to 45 (RRRSTDCIYFLASPLTCKKGSECEYRHSDA) and 47 to 73 (RMNPRDCWYWFNGNCANPKCSFRHPPL). A disordered region spans residues 78-106 (GAPTTPRTSQQSAPQVSVPAQAPVPNPAS). Residues 86 to 106 (SQQSAPQVSVPAQAPVPNPAS) show a composition bias toward low complexity. A C3H1-type 3 zinc finger spans residues 109 to 136 (AKQGVPCYYFQKGMCVKGDRCAFLHLPQ). Disordered stretches follow at residues 155–280 (VPHP…RTNG), 308–327 (LSESRFSQREPMPLTADSSD), 335–452 (QRRL…DAES), 512–580 (LKRK…LSPA), and 586–605 (EAADDASRELEEQQDVETAE). 2 stretches are compositionally biased toward polar residues: residues 160 to 175 (LKNSWTKPNSSAQQNA) and 189 to 203 (NGKTAQKQNLTNRAG). The segment covering 267–280 (SLREDRGAYRRTNG) has biased composition (basic and acidic residues). A compositionally biased stretch (basic and acidic residues) spans 347-359 (SDRHNVYPEDERH). Residues 369 to 379 (QASNDGVSSSR) are compositionally biased toward polar residues. The span at 419–433 (LRGKLHDRLKAKPNE) shows a compositional bias: basic and acidic residues. Residues 435-445 (VSGNVQSSLSK) are compositionally biased toward polar residues. The span at 527 to 536 (GSKREEHSGG) shows a compositional bias: basic and acidic residues.

The sequence is that of Zinc finger CCCH domain-containing protein 19 from Oryza sativa subsp. japonica (Rice).